The primary structure comprises 585 residues: A-type ATP synthase subunit A (585 aa).

The tract at residues 192–211 is disordered; sequence MRQEWPVREPRPTVEKKTPR. A compositionally biased stretch (basic and acidic residues) spans 196–211; sequence WPVREPRPTVEKKTPR. 237–244 serves as a coordination point for ATP; sequence GPFGSGKT.

This sequence belongs to the ATPase alpha/beta chains family. As to quaternary structure, has multiple subunits with at least A(3), B(3), C, D, E, F, H, I and proteolipid K(x).

It is found in the cell membrane. The enzyme catalyses ATP + H2O + 4 H(+)(in) = ADP + phosphate + 5 H(+)(out). Component of the A-type ATP synthase that produces ATP from ADP in the presence of a proton gradient across the membrane. The A chain is the catalytic subunit. The chain is A-type ATP synthase subunit A from Haloquadratum walsbyi (strain DSM 16790 / HBSQ001).